The following is a 282-amino-acid chain: Cell division protein FtsQ (282 aa).

The Cytoplasmic portion of the chain corresponds to 1-30 (MINIGPPKKRRLRRKGNRFKKTRRVIPWRR). A helical membrane pass occupies residues 31-51 (LMIGALWGTMALASLGMVVAV). The Periplasmic portion of the chain corresponds to 52 to 282 (ACFAGQMLFA…LDAGELRGKG (231 aa)). In terms of domain architecture, POTRA spans 65–133 (FKVERIQVEN…DQLVIRVDER (69 aa)).

Belongs to the FtsQ/DivIB family. FtsQ subfamily.

The protein localises to the cell inner membrane. In terms of biological role, essential cell division protein. The sequence is that of Cell division protein FtsQ from Syntrophotalea carbinolica (strain DSM 2380 / NBRC 103641 / GraBd1) (Pelobacter carbinolicus).